Consider the following 425-residue polypeptide: Serine--tRNA ligase (425 aa).

235 to 237 serves as a coordination point for L-serine; it reads TAE. ATP is bound at residue 266–268; it reads RSE. Residue glutamate 289 coordinates L-serine. Residue 353–356 participates in ATP binding; the sequence is EISS. L-serine is bound at residue serine 389.

This sequence belongs to the class-II aminoacyl-tRNA synthetase family. Type-1 seryl-tRNA synthetase subfamily. As to quaternary structure, homodimer. The tRNA molecule binds across the dimer.

The protein resides in the cytoplasm. It catalyses the reaction tRNA(Ser) + L-serine + ATP = L-seryl-tRNA(Ser) + AMP + diphosphate + H(+). The catalysed reaction is tRNA(Sec) + L-serine + ATP = L-seryl-tRNA(Sec) + AMP + diphosphate + H(+). The protein operates within aminoacyl-tRNA biosynthesis; selenocysteinyl-tRNA(Sec) biosynthesis; L-seryl-tRNA(Sec) from L-serine and tRNA(Sec): step 1/1. In terms of biological role, catalyzes the attachment of serine to tRNA(Ser). Is also able to aminoacylate tRNA(Sec) with serine, to form the misacylated tRNA L-seryl-tRNA(Sec), which will be further converted into selenocysteinyl-tRNA(Sec). This Desulfotalea psychrophila (strain LSv54 / DSM 12343) protein is Serine--tRNA ligase.